A 332-amino-acid polypeptide reads, in one-letter code: Melanocortin receptor 4 (332 aa).

The Extracellular segment spans residues 1-43; the sequence is MNSTHHHGMYTSLHLWNRSSYGLHGNASESLGKGHPDGGCYEQ. N-linked (GlcNAc...) asparagine glycans are attached at residues asparagine 2, asparagine 17, and asparagine 26. 2 cysteine pairs are disulfide-bonded: cysteine 40-cysteine 279 and cysteine 271-cysteine 277. The helical transmembrane segment at 44–69 threads the bilayer; it reads LFVSPEVFVTLGVISLLENILVIVAI. The Cytoplasmic segment spans residues 70–81; it reads AKNKNLHSPMYF. Residues 82–106 traverse the membrane as a helical segment; it reads FICSLAVADMLVSVSNGSETIVITL. Residue glutamate 100 participates in Ca(2+) binding. Over 107–123 the chain is Extracellular; that stretch reads LNSTDTDAQSFTVNIDN. N-linked (GlcNAc...) asparagine glycosylation occurs at asparagine 108. Aspartate 122 and aspartate 126 together coordinate Ca(2+). Residues 124–145 traverse the membrane as a helical segment; that stretch reads VIDSVICSSLLASICSLLSIAV. Topologically, residues 146 to 165 are cytoplasmic; the sequence is DRYFTIFYALQYHNIMTVRR. Residues 166 to 186 traverse the membrane as a helical segment; that stretch reads VGIIISCIWAACTVSGVLFII. Residues 187 to 191 lie on the Extracellular side of the membrane; it reads YSDSS. A helical membrane pass occupies residues 192-215; the sequence is AVIICLISMFFTMLVLMASLYVHM. The Cytoplasmic portion of the chain corresponds to 216 to 248; that stretch reads FLMARLHIKRIAVLPGTGTIRQGTNMKGAITLT. Residues 249–271 traverse the membrane as a helical segment; that stretch reads ILIGVFVVCWAPFFLHLLFYISC. Residues 272–280 lie on the Extracellular side of the membrane; sequence PQNPYCVCF. The helical transmembrane segment at 281 to 304 threads the bilayer; sequence MSHFNLYLILIMCNAVIDPLIYAL. The Cytoplasmic portion of the chain corresponds to 305-332; sequence RSQELRKTFKEIICFYPLGGICELSSRY. Cysteine 318 is lipidated: S-palmitoyl cysteine.

It belongs to the G-protein coupled receptor 1 family. Homodimer; disulfide-linked, also forms higher order oligomers. Interacts with GNAS. Interacts with ATRNL1. Interacts with MGRN1; this interaction competes with GNAS-binding and thus inhibits agonist-induced cAMP production. Interacts with MRAP and MRAP2; these associated factors increase ligand-sensitivity and generation of cAMP.

It is found in the cell membrane. Functionally, hormone receptor that acts as a key component of the leptin-melanocortin pathway at the intersection of homeostatic maintenance of energetic state. Plays a role in regulating food intake: activation by a stimulating hormone such as anorexigenic alpha-melanocyte stimulating hormone (alpha-MSH) inhibits appetite, whereas binding to a natural antagonist like Agouti-related protein/AGRP promotes appetite. G-protein-coupled receptor that activates conventional Galphas signaling leading to induction of anorexogenic signaling in the hypothalamus to result in negative energy balance. Regulates the firing activity of neurons from the hypothalamus by alpha-MSH and AGRP independently of Galphas signaling by ligand-induced coupling of closure of inwardly rectifying potassium channel KCNJ13. In intestinal epithelial cells, plays a role in the inhibition of hepatic glucose production via nesfatin-1/NUCB2 leading to increased cyclic adenosine monophosphate (cAMP) levels and glucagon-like peptide 1 (GLP-1) secretion in the intestinal epithelium. The protein is Melanocortin receptor 4 (Mc4r) of Mus musculus (Mouse).